Consider the following 264-residue polypeptide: Hemin import ATP-binding protein HmuV (264 aa).

Residues 2–241 enclose the ABC transporter domain; that stretch reads IEVSGVSVRL…ETMLSVFGLR (240 aa). 34 to 41 is an ATP binding site; sequence GPNGSGKT.

The protein belongs to the ABC transporter superfamily. Heme (hemin) importer (TC 3.A.1.14.5) family. As to quaternary structure, the complex is composed of two ATP-binding proteins (HmuV), two transmembrane proteins (HmuU) and a solute-binding protein (HmuT).

Its subcellular location is the cell inner membrane. Its function is as follows. Part of the ABC transporter complex HmuTUV involved in hemin import. Responsible for energy coupling to the transport system. This is Hemin import ATP-binding protein HmuV from Rhizobium leguminosarum.